The following is a 631-amino-acid chain: Phosphomethylpyrimidine synthase (631 aa).

Substrate-binding positions include Asn239, Met268, Tyr297, His333, 353-355 (SRG), 394-397 (DGLR), and Glu433. His437 lines the Zn(2+) pocket. Residue Tyr460 participates in substrate binding. Position 501 (His501) interacts with Zn(2+). Positions 581, 584, and 589 each coordinate [4Fe-4S] cluster.

The protein belongs to the ThiC family. As to quaternary structure, homodimer. It depends on [4Fe-4S] cluster as a cofactor.

The catalysed reaction is 5-amino-1-(5-phospho-beta-D-ribosyl)imidazole + S-adenosyl-L-methionine = 4-amino-2-methyl-5-(phosphooxymethyl)pyrimidine + CO + 5'-deoxyadenosine + formate + L-methionine + 3 H(+). The protein operates within cofactor biosynthesis; thiamine diphosphate biosynthesis. Its function is as follows. Catalyzes the synthesis of the hydroxymethylpyrimidine phosphate (HMP-P) moiety of thiamine from aminoimidazole ribotide (AIR) in a radical S-adenosyl-L-methionine (SAM)-dependent reaction. This Salmonella paratyphi B (strain ATCC BAA-1250 / SPB7) protein is Phosphomethylpyrimidine synthase.